Here is a 195-residue protein sequence, read N- to C-terminus: MSVHIELPRELRPLMKKPLGILYRGKGRDTIEKFAGELSSPTKLISVGDVTTFHLLEAGIIPDICIVDDRTKRKPVSSDVSVRNRDKVYEEVSVDNPAGIITDELIRTLCEAFASEKLLRIFVRGEEDLATLPVILLAPPGSVVLYGQPDEGVVFVEVTEKKKEEIRALFEKLISKNQNNELDKIRRILDGHKDN.

Residues D49, V50, D68, E127, and D150 each contribute to the GTP site.

This sequence belongs to the GTP-dependent DPCK family.

It catalyses the reaction 3'-dephospho-CoA + GTP = GDP + CoA + H(+). It functions in the pathway cofactor biosynthesis; coenzyme A biosynthesis. Catalyzes the GTP-dependent phosphorylation of the 3'-hydroxyl group of dephosphocoenzyme A to form coenzyme A (CoA). The protein is GTP-dependent dephospho-CoA kinase of Methanosarcina mazei (strain ATCC BAA-159 / DSM 3647 / Goe1 / Go1 / JCM 11833 / OCM 88) (Methanosarcina frisia).